Here is a 364-residue protein sequence, read N- to C-terminus: 4-hydroxy-3-methylbut-2-en-1-yl diphosphate synthase (flavodoxin) (364 aa).

[4Fe-4S] cluster is bound by residues Cys-268, Cys-271, Cys-303, and Glu-310.

This sequence belongs to the IspG family. It depends on [4Fe-4S] cluster as a cofactor.

The catalysed reaction is (2E)-4-hydroxy-3-methylbut-2-enyl diphosphate + oxidized [flavodoxin] + H2O + 2 H(+) = 2-C-methyl-D-erythritol 2,4-cyclic diphosphate + reduced [flavodoxin]. It participates in isoprenoid biosynthesis; isopentenyl diphosphate biosynthesis via DXP pathway; isopentenyl diphosphate from 1-deoxy-D-xylulose 5-phosphate: step 5/6. Functionally, converts 2C-methyl-D-erythritol 2,4-cyclodiphosphate (ME-2,4cPP) into 1-hydroxy-2-methyl-2-(E)-butenyl 4-diphosphate. The protein is 4-hydroxy-3-methylbut-2-en-1-yl diphosphate synthase (flavodoxin) of Desulfotalea psychrophila (strain LSv54 / DSM 12343).